The following is a 774-amino-acid chain: Ion-translocating oxidoreductase complex subunit C (774 aa).

4Fe-4S ferredoxin-type domains follow at residues 359-389 and 399-428; these read ELPE…QQLH and QLLA…VQYY. 8 residues coordinate [4Fe-4S] cluster: cysteine 369, cysteine 372, cysteine 375, cysteine 379, cysteine 408, cysteine 411, cysteine 414, and cysteine 418. Residues 453 to 490 are compositionally biased toward basic and acidic residues; that stretch reads EQRQARLRRDEERRAAERAQRAEKAALARAAQAEREEA. The segment at 453 to 493 is disordered; sequence EQRQARLRRDEERRAAERAQRAEKAALARAAQAEREEAAPA.

This sequence belongs to the 4Fe4S bacterial-type ferredoxin family. RnfC subfamily. As to quaternary structure, the complex is composed of six subunits: RnfA, RnfB, RnfC, RnfD, RnfE and RnfG. Requires [4Fe-4S] cluster as cofactor.

The protein localises to the cell inner membrane. Its function is as follows. Part of a membrane-bound complex that couples electron transfer with translocation of ions across the membrane. This chain is Ion-translocating oxidoreductase complex subunit C, found in Pseudomonas aeruginosa (strain ATCC 15692 / DSM 22644 / CIP 104116 / JCM 14847 / LMG 12228 / 1C / PRS 101 / PAO1).